The sequence spans 467 residues: MSKVASIVDVLQGKVAIGETVTVRGWVRTRRDSKAGLSFLAVYDGSCFDPIQAIINNDIENYESEILRLTTGCSVIVTGKVVESPAEGQAVELQAEKVEVTGFVEDPDTYPMAAKRHSIEYLREVAHLRPRTNIIGAVARVRHCLSQAIHRFFHEQGFYWVATPLITASDTEGAGEMFRVSTLDLENLPRSENGKVDFSQDFFGKESFLTVSGQLNGETYACALSKIYTFGPTFRAENSNTTRHLAEFWMVEPEVAFATLADNAKLAEDMLKYVFRAVLAERKDDLQFFEKHVDKDVITRLENFVNSDFAQIDYTDAIDVLLKSGKKFEFPVSWGIDLSSEHERFLAEEYFKSPVVVKNYPKDIKAFYMRLNDDGKTVAAMDVLAPGIGEIIGGSQREERLEVLDKRMEEMGLNPDDYWWYRDLRKYGSVPHSGFGLGFERLIVYVTGVQNIRDVIPFPRAPRNANF.

Belongs to the class-II aminoacyl-tRNA synthetase family. As to quaternary structure, homodimer.

It localises to the cytoplasm. It carries out the reaction tRNA(Asn) + L-asparagine + ATP = L-asparaginyl-tRNA(Asn) + AMP + diphosphate + H(+). This Haemophilus influenzae (strain PittGG) protein is Asparagine--tRNA ligase.